A 152-amino-acid chain; its full sequence is FAD synthase (152 aa).

Residues 9-10 (TF), 14-17 (HPGH), and aspartate 92 each bind ATP.

This sequence belongs to the archaeal FAD synthase family. In terms of assembly, homodimer. Requires a divalent metal cation as cofactor.

The enzyme catalyses FMN + ATP + H(+) = FAD + diphosphate. It functions in the pathway cofactor biosynthesis; FAD biosynthesis; FAD from FMN: step 1/1. Functionally, catalyzes the transfer of the AMP portion of ATP to flavin mononucleotide (FMN) to produce flavin adenine dinucleotide (FAD) coenzyme. This Ferroglobus placidus (strain DSM 10642 / AEDII12DO) protein is FAD synthase.